A 182-amino-acid chain; its full sequence is uncharacterized protein (182 aa).

Belongs to the staphylococcal tandem lipoprotein family.

This is an uncharacterized protein from Staphylococcus haemolyticus (strain JCSC1435).